The following is a 406-amino-acid chain: Argininosuccinate synthase (406 aa).

ATP is bound by residues 13–21 (AYSGGLDTS) and Ala40. 2 residues coordinate L-citrulline: Tyr91 and Ser96. Position 121 (Gly121) interacts with ATP. L-aspartate contacts are provided by Thr123, Asn127, and Asp128. Residue Asn127 coordinates L-citrulline. Positions 131, 182, 191, 267, and 279 each coordinate L-citrulline.

This sequence belongs to the argininosuccinate synthase family. Type 1 subfamily. In terms of assembly, homotetramer.

The protein localises to the cytoplasm. The catalysed reaction is L-citrulline + L-aspartate + ATP = 2-(N(omega)-L-arginino)succinate + AMP + diphosphate + H(+). It functions in the pathway amino-acid biosynthesis; L-arginine biosynthesis; L-arginine from L-ornithine and carbamoyl phosphate: step 2/3. This chain is Argininosuccinate synthase, found in Brucella suis biovar 1 (strain 1330).